Here is a 361-residue protein sequence, read N- to C-terminus: L-threonine 3-dehydrogenase (361 aa).

Residue Cys-38 coordinates Zn(2+). Active-site charge relay system residues include Thr-40 and His-43. His-63, Glu-64, Cys-93, Cys-96, Cys-99, and Cys-107 together coordinate Zn(2+). Residues Ile-175, Asp-195, Arg-200, 262–264 (LGI), and 286–287 (IY) each bind NAD(+).

It belongs to the zinc-containing alcohol dehydrogenase family. As to quaternary structure, homotetramer. Requires Zn(2+) as cofactor.

It is found in the cytoplasm. The catalysed reaction is L-threonine + NAD(+) = (2S)-2-amino-3-oxobutanoate + NADH + H(+). It functions in the pathway amino-acid degradation; L-threonine degradation via oxydo-reductase pathway; glycine from L-threonine: step 1/2. Catalyzes the NAD(+)-dependent oxidation of L-threonine to 2-amino-3-ketobutyrate. This is L-threonine 3-dehydrogenase from Pectobacterium atrosepticum (strain SCRI 1043 / ATCC BAA-672) (Erwinia carotovora subsp. atroseptica).